Here is a 118-residue protein sequence, read N- to C-terminus: NADH-ubiquinone oxidoreductase chain 3 (118 aa).

3 consecutive transmembrane segments (helical) span residues 6–26 (IFVY…VSFL), 62–82 (LVSI…PWAV), and 87–107 (IGLF…IGFV).

It belongs to the complex I subunit 3 family.

The protein resides in the mitochondrion membrane. It catalyses the reaction a ubiquinone + NADH + 5 H(+)(in) = a ubiquinol + NAD(+) + 4 H(+)(out). Its function is as follows. Core subunit of the mitochondrial membrane respiratory chain NADH dehydrogenase (Complex I) that is believed to belong to the minimal assembly required for catalysis. Complex I functions in the transfer of electrons from NADH to the respiratory chain. The immediate electron acceptor for the enzyme is believed to be ubiquinone. In Marchantia polymorpha (Common liverwort), this protein is NADH-ubiquinone oxidoreductase chain 3 (ND3).